The primary structure comprises 235 residues: Chalcone--flavanone isomerase 2 (235 aa).

Thr50 and Ser192 together coordinate substrate.

The protein belongs to the chalcone isomerase family.

It catalyses the reaction a chalcone = a flavanone.. The protein operates within secondary metabolite biosynthesis; flavonoid biosynthesis. Catalyzes the intramolecular cyclization of bicyclic chalcones into tricyclic (S)-flavanones. Responsible for the isomerization of 4,2',4',6'-tetrahydroxychalcone (also termed chalcone) into naringenin. The polypeptide is Chalcone--flavanone isomerase 2 (CHI2) (Chrysanthemum morifolium (Florist's daisy)).